A 538-amino-acid polypeptide reads, in one-letter code: Mitochondria-eating protein (538 aa).

Residues methionine 1 to arginine 273 are interaction with YWHAG/14-3-3 protein gamma. Serine 85 is subject to Phosphoserine. The segment at serine 97–glutamine 137 is disordered. The span at threonine 105 to glutamine 122 shows a compositional bias: basic and acidic residues. Coiled coils occupy residues aspartate 118 to asparagine 187 and aspartate 219 to arginine 256. Polar residues predominate over residues glutamine 123–glutamine 137. Residues serine 156 and serine 159 each carry the phosphoserine modification. Disordered regions lie at residues glutamine 173–methionine 226 and lysine 247–serine 294. The segment covering glutamate 181–glutamine 210 has biased composition (basic and acidic residues). Polar residues predominate over residues tryptophan 211–glutamate 224. Positions arginine 253 to serine 278 are enriched in low complexity. A phosphoserine mark is found at serine 287 and serine 509.

The protein belongs to the MIEAP family. Interacts (via coiled-coil domains) with BNIP3L (via BH3 domain). Interacts (via coiled-coil domains) with BNIP3 (via BH3 domain). In terms of assembly, interacts with YWHAG/14-3-3 protein gamma; a protein that also plays a role in MALM.

It is found in the cytoplasm. The protein localises to the cytosol. It localises to the mitochondrion outer membrane. Its subcellular location is the mitochondrion matrix. In terms of biological role, key regulator of mitochondrial quality that mediates the repairing or degradation of unhealthy mitochondria in response to mitochondrial damage. Mediator of mitochondrial protein catabolic process (also named MALM) by mediating the degradation of damaged proteins inside mitochondria by promoting the accumulation in the mitochondrial matrix of hydrolases that are characteristic of the lysosomal lumen. Also involved in mitochondrion degradation of damaged mitochondria by promoting the formation of vacuole-like structures (named MIV), which engulf and degrade unhealthy mitochondria by accumulating lysosomes. The physical interaction of SPATA18/MIEAP, BNIP3 and BNIP3L/NIX at the mitochondrial outer membrane regulates the opening of a pore in the mitochondrial double membrane in order to mediate the translocation of lysosomal proteins from the cytoplasm to the mitochondrial matrix. Binds cardiolipin. May form molecular condensates (non-membrane-bounded organelles) within mitochondria that compartmentalize and promote cardiolipin metabolism. The polypeptide is Mitochondria-eating protein (SPATA18) (Homo sapiens (Human)).